Here is a 158-residue protein sequence, read N- to C-terminus: Small ribosomal subunit protein uS7 (158 aa).

Belongs to the universal ribosomal protein uS7 family. Part of the 30S ribosomal subunit. Contacts proteins S9 and S11.

Its function is as follows. One of the primary rRNA binding proteins, it binds directly to 16S rRNA where it nucleates assembly of the head domain of the 30S subunit. Is located at the subunit interface close to the decoding center, probably blocks exit of the E-site tRNA. This chain is Small ribosomal subunit protein uS7, found in Porphyromonas gingivalis (strain ATCC BAA-308 / W83).